We begin with the raw amino-acid sequence, 31 residues long: GIPCAESCVWIPCTVTALLGCSCKDKVCYLD.

Positions 1-31 form a cross-link, cyclopeptide (Gly-Asp); the sequence is GIPCAESCVWIPCTVTALLGCSCKDKVCYLD. Intrachain disulfides connect cysteine 4/cysteine 21, cysteine 8/cysteine 23, and cysteine 13/cysteine 28.

Contains 3 disulfide bonds. Post-translationally, this is a cyclic peptide.

Probably participates in a plant defense mechanism. This is Cyclotide cter-E from Clitoria ternatea (Butterfly pea).